The sequence spans 147 residues: Probable inactive ribonuclease-like protein 12 (147 aa).

The N-terminal stretch at 1-20 (MIIMVIIFLVLLFWENEVND) is a signal peptide.

It belongs to the pancreatic ribonuclease family.

It is found in the secreted. Does not exhibit any ribonuclease activity. This chain is Probable inactive ribonuclease-like protein 12 (RNASE12), found in Homo sapiens (Human).